Consider the following 391-residue polypeptide: Formate-dependent phosphoribosylglycinamide formyltransferase (391 aa).

Residues 18 to 19 (EL) and glutamate 78 contribute to the N(1)-(5-phospho-beta-D-ribosyl)glycinamide site. ATP is bound by residues arginine 110, lysine 151, 156 to 161 (SSGKGQ), 191 to 194 (EEFI), and glutamate 199. In terms of domain architecture, ATP-grasp spans 115-305 (ELVSRDLKIK…EFELHLRAFL (191 aa)). The Mg(2+) site is built by glutamate 264 and glutamate 276. N(1)-(5-phospho-beta-D-ribosyl)glycinamide contacts are provided by residues aspartate 283, lysine 353, and 360–361 (RR).

This sequence belongs to the PurK/PurT family. As to quaternary structure, homodimer.

The enzyme catalyses N(1)-(5-phospho-beta-D-ribosyl)glycinamide + formate + ATP = N(2)-formyl-N(1)-(5-phospho-beta-D-ribosyl)glycinamide + ADP + phosphate + H(+). Its pathway is purine metabolism; IMP biosynthesis via de novo pathway; N(2)-formyl-N(1)-(5-phospho-D-ribosyl)glycinamide from N(1)-(5-phospho-D-ribosyl)glycinamide (formate route): step 1/1. Its function is as follows. Involved in the de novo purine biosynthesis. Catalyzes the transfer of formate to 5-phospho-ribosyl-glycinamide (GAR), producing 5-phospho-ribosyl-N-formylglycinamide (FGAR). Formate is provided by PurU via hydrolysis of 10-formyl-tetrahydrofolate. This chain is Formate-dependent phosphoribosylglycinamide formyltransferase, found in Prochlorococcus marinus (strain MIT 9312).